The chain runs to 277 residues: ATP-dependent Clp protease proteolytic subunit, mitochondrial (277 aa).

Residues 1 to 56 (MWPGILVGGARVASCRYPALGPRLAAHFPAQRPPQRTLQNGLALQRCLHATATRAL) constitute a mitochondrion transit peptide. The Nucleophile role is filled by serine 153. Residue histidine 178 is part of the active site. Lysine 200 is subject to N6-succinyllysine. Residue lysine 211 is modified to N6-acetyllysine. The disordered stretch occupies residues 246–277 (VHPPQDGEDEPTLVQKEPVEAAPAAEPVPAST). Residues 265–277 (EAAPAAEPVPAST) show a composition bias toward low complexity.

The protein belongs to the peptidase S14 family. As to quaternary structure, fourteen CLPP subunits assemble into 2 heptameric rings which stack back to back to give a disk-like structure with a central cavity. Component of the ClpXP complex formed by the assembly of two CLPP heptameric rings with two CLPX hexameric rings, giving rise to a symmetrical structure with two central CLPP rings flanked by a CLPX ring at either end of the complex. In terms of tissue distribution, detected in liver (at protein level). Predominantly expressed in skeletal muscle. Intermediate levels in heart, liver and pancreas. Low in brain, placenta, lung and kidney.

It localises to the mitochondrion matrix. It carries out the reaction Hydrolysis of proteins to small peptides in the presence of ATP and magnesium. alpha-casein is the usual test substrate. In the absence of ATP, only oligopeptides shorter than five residues are hydrolyzed (such as succinyl-Leu-Tyr-|-NHMec, and Leu-Tyr-Leu-|-Tyr-Trp, in which cleavage of the -Tyr-|-Leu- and -Tyr-|-Trp bonds also occurs).. In terms of biological role, protease component of the ClpXP complex that cleaves peptides and various proteins in an ATP-dependent process. Has low peptidase activity in the absence of CLPX. The ClpXP complex can degrade CSN1S1, CSN2 and CSN3, as well as synthetic peptides (in vitro) and may be responsible for a fairly general and central housekeeping function rather than for the degradation of specific substrates. Cleaves PINK1 in the mitochondrion. In Homo sapiens (Human), this protein is ATP-dependent Clp protease proteolytic subunit, mitochondrial.